The chain runs to 345 residues: Beta-hexosaminidase (345 aa).

Substrate contacts are provided by residues Asp-60, Arg-68, Arg-132, and Lys-162–His-163. His-175 functions as the Proton donor/acceptor in the catalytic mechanism. The active-site Nucleophile is the Asp-247.

It belongs to the glycosyl hydrolase 3 family. NagZ subfamily.

It is found in the cytoplasm. It catalyses the reaction Hydrolysis of terminal non-reducing N-acetyl-D-hexosamine residues in N-acetyl-beta-D-hexosaminides.. It participates in cell wall biogenesis; peptidoglycan recycling. Functionally, plays a role in peptidoglycan recycling by cleaving the terminal beta-1,4-linked N-acetylglucosamine (GlcNAc) from peptide-linked peptidoglycan fragments, giving rise to free GlcNAc, anhydro-N-acetylmuramic acid and anhydro-N-acetylmuramic acid-linked peptides. The protein is Beta-hexosaminidase of Actinobacillus pleuropneumoniae serotype 5b (strain L20).